We begin with the raw amino-acid sequence, 329 residues long: Putative GTPase Obg (329 aa).

An Obg domain is found at 1 to 159 (MQFIDQARIM…WPLQLELKLL (159 aa)). One can recognise an OBG-type G domain in the interval 160-328 (AEVGIIGLPN…LKTQIWQQLG (169 aa)). Residues 166–173 (GLPNAGKS), 191–195 (FTTLI), 213–216 (DIPG), 280–283 (SKIE), and 309–311 (SSA) contribute to the GTP site. 2 residues coordinate Mg(2+): S173 and T193.

It belongs to the TRAFAC class OBG-HflX-like GTPase superfamily. OBG GTPase family. In terms of assembly, monomer. Requires Mg(2+) as cofactor.

The protein resides in the plastid. The protein localises to the organellar chromatophore. In terms of biological role, an essential GTPase which binds GTP, GDP and possibly (p)ppGpp with moderate affinity, with high nucleotide exchange rates and a fairly low GTP hydrolysis rate. The sequence is that of Putative GTPase Obg from Paulinella chromatophora.